The sequence spans 285 residues: HTH-type transcriptional regulator MurR (285 aa).

In terms of domain architecture, HTH rpiR-type spans 1–77; it reads MLYLTKISNA…MALIGEYSAS (77 aa). The segment at residues 37–56 is a DNA-binding region (H-T-H motif); the sequence is SRQMAKQLGISQSSIVKFAQ. One can recognise an SIS domain in the interval 128-268; the sequence is IIEVISKAPF…FVGLVQLNDV (141 aa).

As to quaternary structure, homotetramer.

Its pathway is amino-sugar metabolism; N-acetylmuramate degradation [regulation]. Functionally, represses the expression of the murPQ operon involved in the uptake and degradation of N-acetylmuramic acid (MurNAc). Binds to two adjacent inverted repeats within the operator region. MurNAc 6-phosphate, the substrate of MurQ, is the specific inducer that weakens binding of MurR to the operator. This is HTH-type transcriptional regulator MurR from Escherichia coli (strain K12 / MC4100 / BW2952).